A 286-amino-acid polypeptide reads, in one-letter code: Bifunctional protein FolD (286 aa).

NADP(+) is bound by residues 165–167 (GRS) and Ser-190.

The protein belongs to the tetrahydrofolate dehydrogenase/cyclohydrolase family. As to quaternary structure, homodimer.

The catalysed reaction is (6R)-5,10-methylene-5,6,7,8-tetrahydrofolate + NADP(+) = (6R)-5,10-methenyltetrahydrofolate + NADPH. It carries out the reaction (6R)-5,10-methenyltetrahydrofolate + H2O = (6R)-10-formyltetrahydrofolate + H(+). The protein operates within one-carbon metabolism; tetrahydrofolate interconversion. In terms of biological role, catalyzes the oxidation of 5,10-methylenetetrahydrofolate to 5,10-methenyltetrahydrofolate and then the hydrolysis of 5,10-methenyltetrahydrofolate to 10-formyltetrahydrofolate. The sequence is that of Bifunctional protein FolD from Burkholderia lata (strain ATCC 17760 / DSM 23089 / LMG 22485 / NCIMB 9086 / R18194 / 383).